The chain runs to 372 residues: Flagellar P-ring protein (372 aa).

An N-terminal signal peptide occupies residues 1–26; the sequence is MNLSSLSFRLLATLLGACVVVAPASA.

It belongs to the FlgI family. In terms of assembly, the basal body constitutes a major portion of the flagellar organelle and consists of four rings (L,P,S, and M) mounted on a central rod.

It is found in the periplasm. Its subcellular location is the bacterial flagellum basal body. In terms of biological role, assembles around the rod to form the L-ring and probably protects the motor/basal body from shearing forces during rotation. The chain is Flagellar P-ring protein from Xanthomonas oryzae pv. oryzae (strain MAFF 311018).